Here is a 226-residue protein sequence, read N- to C-terminus: EEF1A lysine methyltransferase 1 (226 aa).

Ser2 carries the post-translational modification N-acetylserine. A Phosphoserine modification is found at Ser2.

This sequence belongs to the class I-like SAM-binding methyltransferase superfamily. EFM5 family.

The protein localises to the cytoplasm. The catalysed reaction is L-lysyl-[protein] + 3 S-adenosyl-L-methionine = N(6),N(6),N(6)-trimethyl-L-lysyl-[protein] + 3 S-adenosyl-L-homocysteine + 3 H(+). Functionally, protein-lysine methyltransferase that selectively catalyzes the trimethylation of EEF1A at 'Lys-79'. This Bos taurus (Bovine) protein is EEF1A lysine methyltransferase 1.